The primary structure comprises 1022 residues: Integrator complex subunit 4 (1022 aa).

Residues threonine 148 and lysine 184 each coordinate 1D-myo-inositol hexakisphosphate. The segment at lysine 818 to aspartate 840 is disordered.

The protein belongs to the Integrator subunit 4 family. As to quaternary structure, belongs to the multiprotein complex Integrator, at least composed of IntS1, IntS2, IntS3, IntS4, omd/IntS5, IntS6, defl/IntS7, IntS8, IntS9, IntS10, IntS11, IntS12, asun/IntS13, IntS14 and IntS15. The core complex associates with protein phosphatase 2A subunits mts/PP2A and Pp2A-29B, to form the Integrator-PP2A (INTAC) complex. IntS4 is part of the RNA endonuclease subcomplex, composed of IntS4, IntS9, IntS11 and inositol hexakisphosphate (InsP6).

The protein resides in the nucleus. Functionally, component of the integrator complex, a multiprotein complex that terminates RNA polymerase II (Pol II) transcription in the promoter-proximal region of genes. The integrator complex provides a quality checkpoint during transcription elongation by driving premature transcription termination of transcripts that are unfavorably configured for transcriptional elongation: the complex terminates transcription by (1) catalyzing dephosphorylation of the C-terminal domain (CTD) of Pol II subunit Polr2A/Rbp1 and Spt5, and (2) degrading the exiting nascent RNA transcript via endonuclease activity. The integrator complex is also involved in the 3'-end processing of the U7 snRNA, and also the spliceosomal snRNAs U1, U2, U4 and U5. In Drosophila melanogaster (Fruit fly), this protein is Integrator complex subunit 4.